The primary structure comprises 268 residues: Putative ABC transporter ATP-binding protein LMOf2365_1216 (268 aa).

The ABC transporter domain occupies 2–237; sequence LKTEHISFQY…KSNVEQAGLV (236 aa). Residue 35-42 participates in ATP binding; the sequence is GANGSGKS.

Belongs to the ABC transporter superfamily.

The protein resides in the cell membrane. Functionally, probably part of an ABC transporter complex. Responsible for energy coupling to the transport system. The sequence is that of Putative ABC transporter ATP-binding protein LMOf2365_1216 from Listeria monocytogenes serotype 4b (strain F2365).